A 370-amino-acid chain; its full sequence is DNA replication and repair protein RecF (370 aa).

Residue 30–37 (GENAQGKT) coordinates ATP.

This sequence belongs to the RecF family.

The protein resides in the cytoplasm. Functionally, the RecF protein is involved in DNA metabolism; it is required for DNA replication and normal SOS inducibility. RecF binds preferentially to single-stranded, linear DNA. It also seems to bind ATP. This chain is DNA replication and repair protein RecF, found in Listeria monocytogenes serotype 4b (strain CLIP80459).